The following is a 185-amino-acid chain: Large ribosomal subunit protein uL5 (185 aa).

Belongs to the universal ribosomal protein uL5 family. As to quaternary structure, part of the 50S ribosomal subunit; contacts the 5S rRNA and probably tRNA. Forms a bridge to the 30S subunit in the 70S ribosome.

In terms of biological role, this is one of the proteins that bind and probably mediate the attachment of the 5S RNA into the large ribosomal subunit, where it forms part of the central protuberance. In the 70S ribosome it contacts protein S13 of the 30S subunit (bridge B1b), connecting the 2 subunits; this bridge is implicated in subunit movement. May contact the P site tRNA; the 5S rRNA and some of its associated proteins might help stabilize positioning of ribosome-bound tRNAs. The polypeptide is Large ribosomal subunit protein uL5 (Haloquadratum walsbyi (strain DSM 16790 / HBSQ001)).